A 76-amino-acid polypeptide reads, in one-letter code: Small ribosomal subunit protein bS18 (76 aa).

This sequence belongs to the bacterial ribosomal protein bS18 family. As to quaternary structure, part of the 30S ribosomal subunit. Forms a tight heterodimer with protein bS6.

In terms of biological role, binds as a heterodimer with protein bS6 to the central domain of the 16S rRNA, where it helps stabilize the platform of the 30S subunit. This chain is Small ribosomal subunit protein bS18, found in Alkaliphilus metalliredigens (strain QYMF).